Here is a 483-residue protein sequence, read N- to C-terminus: FAD-dependent oxidoreductase oblC (483 aa).

The N-terminal stretch at 1-21 (MRSVTSLVSFSACLLASSVTA) is a signal peptide. Asparagine 100, asparagine 137, asparagine 190, and asparagine 240 each carry an N-linked (GlcNAc...) asparagine glycan.

The protein belongs to the beta-cyclopiazonate dehydrogenase family. Requires FAD as cofactor.

Its pathway is secondary metabolite biosynthesis; terpenoid biosynthesis. Functionally, FAD-dependent oxidoreductase; part of the gene cluster that mediates the biosynthesis of the sesterterpenes ophiobolins, fungal phytotoxins with potential anti-cancer activities. The first step of the pathway is performed by the sesterterpene synthase oblA that possesses both prenyl transferase and terpene cyclase activity, converting isopentenyl diphosphate and dimethylallyl diphosphate into geranylfarnesyl diphosphate (GFPP) and further converting GFPP into ophiobolin F, respectively. Other sesterterpenoids (C(25) terpenoids) are found as minor products of oblA. The cytochrome P450 monooxygenase oblB then catalyzes a four-step oxidative transformation of ophiobolin F to yield ophiobolin C. The FAD-dependent oxidoreductase oblC might be involved in a later oxidation step that produces ophiobolin A. This is FAD-dependent oxidoreductase oblC from Cochliobolus heterostrophus (strain C5 / ATCC 48332 / race O) (Southern corn leaf blight fungus).